The following is a 577-amino-acid chain: Moesin (577 aa).

In terms of domain architecture, FERM spans 2–295 (PKTINVRVTT…GNHELYMRRR (294 aa)). Ser-74 is subject to Phosphoserine. N6-acetyllysine is present on Lys-79. Position 83 is an N6-succinyllysine (Lys-83). Positions 115 to 120 (IYCPPE) match the [IL]-x-C-x-x-[DE] motif motif. Tyr-116 is subject to Phosphotyrosine. Cys-117 is subject to S-nitrosocysteine. Lys-139 and Lys-165 each carry N6-acetyllysine. Positions 375–401 (LEQERKRAQSEAEKLAKERQEAEEAKE) are enriched in basic and acidic residues. Disordered stretches follow at residues 375 to 409 (LEQE…ASQD) and 466 to 518 (AMST…NERV). At Ser-407 the chain carries Phosphoserine. Positions 476 to 487 (AENEQDEQDENG) are enriched in acidic residues. The segment covering 492–518 (AELRADAMAKDRSEEERTTEAEKNERV) has biased composition (basic and acidic residues). At Ser-527 the chain carries Phosphoserine. Residue Thr-558 is modified to Phosphothreonine; by ROCK2 and STK10.

In resting T-cells, part of a PAG1-NHERF1-MSN complex which is disrupted upon TCR activation. Interacts with NHERF1. Interacts with PPP1R16B. Interacts with PDZD8. Interacts with SELPLG and SYK; these interactions mediate the activation of SYK by SELPLG. Interacts with PDPN (via cytoplasmic domain); this interaction activates RHOA and promotes epithelial-mesenchymal transition. Interacts with SPN/CD43 cytoplasmic tail. Interacts with CD44. Interacts with ICAM2. Interacts with ICAM3 (via C-terminus). Interacts with PDZD8. Interacts with F-actin. Interacts with CD46. Interacts with PTPN6. Post-translationally, phosphorylation on Thr-558 is crucial for the formation of microvilli-like structures. Phosphorylation by ROCK2 suppresses the head-to-tail association of the N-terminal and C-terminal halves resulting in an opened conformation which is capable of actin and membrane-binding. Phosphorylation on Thr-558 by STK10 negatively regulates lymphocyte migration and polarization. S-nitrosylation of Cys-117 is induced by interferon-gamma and oxidatively-modified low-densitity lipoprotein (LDL(ox)) implicating the iNOS-S100A8/9 transnitrosylase complex.

Its subcellular location is the cell membrane. The protein localises to the cytoplasm. The protein resides in the cytoskeleton. It is found in the apical cell membrane. It localises to the cell projection. Its subcellular location is the microvillus membrane. The protein localises to the microvillus. With respect to regulation, a head-to-tail association, of the N-terminal and C-terminal halves results in a closed conformation (inactive form) which is incapable of actin or membrane-binding. Its function is as follows. Ezrin-radixin-moesin (ERM) family protein that connects the actin cytoskeleton to the plasma membrane and thereby regulates the structure and function of specific domains of the cell cortex. Tethers actin filaments by oscillating between a resting and an activated state providing transient interactions between moesin and the actin cytoskeleton. Once phosphorylated on its C-terminal threonine, moesin is activated leading to interaction with F-actin and cytoskeletal rearrangement. These rearrangements regulate many cellular processes, including cell shape determination, membrane transport, and signal transduction. The role of moesin is particularly important in immunity acting on both T and B-cells homeostasis and self-tolerance, regulating lymphocyte egress from lymphoid organs. Modulates phagolysosomal biogenesis in macrophages. Participates also in immunologic synapse formation. This is Moesin from Bos taurus (Bovine).